Reading from the N-terminus, the 274-residue chain is Protein RecA (274 aa).

43–50 (GPESSGKT) serves as a coordination point for ATP.

It belongs to the RecA family.

Its subcellular location is the cytoplasm. Its function is as follows. Can catalyze the hydrolysis of ATP in the presence of single-stranded DNA, the ATP-dependent uptake of single-stranded DNA by duplex DNA, and the ATP-dependent hybridization of homologous single-stranded DNAs. It interacts with LexA causing its activation and leading to its autocatalytic cleavage. This Neisseria mucosa protein is Protein RecA.